The following is a 215-amino-acid chain: Mite allergen Der p 7 (215 aa).

An N-terminal signal peptide occupies residues 1 to 17 (MMKLLLIAAAAFVAVSA). Asn-151 carries N-linked (GlcNAc...) asparagine glycosylation.

It belongs to the mite group 7 allergen family.

It localises to the secreted. The polypeptide is Mite allergen Der p 7 (DERP7) (Dermatophagoides pteronyssinus (European house dust mite)).